We begin with the raw amino-acid sequence, 536 residues long: Light-independent protochlorophyllide reductase subunit B (536 aa).

Asp36 serves as a coordination point for [4Fe-4S] cluster. The active-site Proton donor is the Asp292. 427 to 428 contacts substrate; sequence GL. The span at 448-469 shows a compositional bias: low complexity; sequence SHLGHLGGHQSQTEQQQSQAAT. The interval 448-489 is disordered; that stretch reads SHLGHLGGHQSQTEQQQSQAATNPSTQSNADSSSEESPLWTP. Residues 470–483 are compositionally biased toward polar residues; it reads NPSTQSNADSSSEE.

It belongs to the ChlB/BchB/BchZ family. In terms of assembly, protochlorophyllide reductase is composed of three subunits; ChlL, ChlN and ChlB. Forms a heterotetramer of two ChlB and two ChlN subunits. [4Fe-4S] cluster is required as a cofactor.

It catalyses the reaction chlorophyllide a + oxidized 2[4Fe-4S]-[ferredoxin] + 2 ADP + 2 phosphate = protochlorophyllide a + reduced 2[4Fe-4S]-[ferredoxin] + 2 ATP + 2 H2O. It functions in the pathway porphyrin-containing compound metabolism; chlorophyll biosynthesis (light-independent). Its function is as follows. Component of the dark-operative protochlorophyllide reductase (DPOR) that uses Mg-ATP and reduced ferredoxin to reduce ring D of protochlorophyllide (Pchlide) to form chlorophyllide a (Chlide). This reaction is light-independent. The NB-protein (ChlN-ChlB) is the catalytic component of the complex. The polypeptide is Light-independent protochlorophyllide reductase subunit B (Prochlorococcus marinus (strain MIT 9313)).